Reading from the N-terminus, the 262-residue chain is uncharacterized protein (262 aa).

Residues 13-35 form a helical membrane-spanning segment; sequence VVGALLTVVVIVTAAGIIYVISH.

The protein localises to the membrane. This is an uncharacterized protein from Archaeoglobus fulgidus (strain ATCC 49558 / DSM 4304 / JCM 9628 / NBRC 100126 / VC-16).